A 493-amino-acid chain; its full sequence is Probable mannosyl-oligosaccharide alpha-1,2-mannosidase 1B (493 aa).

A signal peptide spans 1-18 (MHLPSLSVALALVSSSLA). Asn87 and Asn174 each carry an N-linked (GlcNAc...) asparagine glycan. Cys324 and Cys353 are joined by a disulfide. The active-site Proton donor is Glu367. Residue Asn489 is glycosylated (N-linked (GlcNAc...) asparagine).

The protein belongs to the glycosyl hydrolase 47 family. In terms of assembly, monomer. Requires Ca(2+) as cofactor. Mg(2+) is required as a cofactor.

It is found in the cytoplasmic vesicle lumen. It carries out the reaction N(4)-(alpha-D-Man-(1-&gt;2)-alpha-D-Man-(1-&gt;2)-alpha-D-Man-(1-&gt;3)-[alpha-D-Man-(1-&gt;2)-alpha-D-Man-(1-&gt;3)-[alpha-D-Man-(1-&gt;2)-alpha-D-Man-(1-&gt;6)]-alpha-D-Man-(1-&gt;6)]-beta-D-Man-(1-&gt;4)-beta-D-GlcNAc-(1-&gt;4)-beta-D-GlcNAc)-L-asparaginyl-[protein] (N-glucan mannose isomer 9A1,2,3B1,2,3) + 4 H2O = N(4)-(alpha-D-Man-(1-&gt;3)-[alpha-D-Man-(1-&gt;3)-[alpha-D-Man-(1-&gt;6)]-alpha-D-Man-(1-&gt;6)]-beta-D-Man-(1-&gt;4)-beta-D-GlcNAc-(1-&gt;4)-beta-D-GlcNAc)-L-asparaginyl-[protein] (N-glucan mannose isomer 5A1,2) + 4 beta-D-mannose. The catalysed reaction is N(4)-(alpha-D-Man-(1-&gt;2)-alpha-D-Man-(1-&gt;2)-alpha-D-Man-(1-&gt;3)-[alpha-D-Man-(1-&gt;3)-[alpha-D-Man-(1-&gt;2)-alpha-D-Man-(1-&gt;6)]-alpha-D-Man-(1-&gt;6)]-beta-D-Man-(1-&gt;4)-beta-D-GlcNAc-(1-&gt;4)-beta-D-GlcNAc)-L-asparaginyl-[protein] (N-glucan mannose isomer 8A1,2,3B1,3) + 3 H2O = N(4)-(alpha-D-Man-(1-&gt;3)-[alpha-D-Man-(1-&gt;3)-[alpha-D-Man-(1-&gt;6)]-alpha-D-Man-(1-&gt;6)]-beta-D-Man-(1-&gt;4)-beta-D-GlcNAc-(1-&gt;4)-beta-D-GlcNAc)-L-asparaginyl-[protein] (N-glucan mannose isomer 5A1,2) + 3 beta-D-mannose. It functions in the pathway protein modification; protein glycosylation. In terms of biological role, involved in the maturation of Asn-linked oligosaccharides. Progressively trims alpha-1,2-linked mannose residues from Man(9)GlcNAc(2) to produce Man(5)GlcNAc(2). This chain is Probable mannosyl-oligosaccharide alpha-1,2-mannosidase 1B (mns1B), found in Aspergillus fumigatus (strain CBS 144.89 / FGSC A1163 / CEA10) (Neosartorya fumigata).